Consider the following 184-residue polypeptide: Cytidylate kinase (184 aa).

8–16 serves as a coordination point for ATP; sequence GQPGSGKTT.

Belongs to the cytidylate kinase family. Type 2 subfamily.

It is found in the cytoplasm. The enzyme catalyses CMP + ATP = CDP + ADP. It catalyses the reaction dCMP + ATP = dCDP + ADP. In Pyrobaculum islandicum (strain DSM 4184 / JCM 9189 / GEO3), this protein is Cytidylate kinase.